Reading from the N-terminus, the 459-residue chain is Argininosuccinate lyase (459 aa).

Belongs to the lyase 1 family. Argininosuccinate lyase subfamily.

Its subcellular location is the cytoplasm. It catalyses the reaction 2-(N(omega)-L-arginino)succinate = fumarate + L-arginine. It functions in the pathway amino-acid biosynthesis; L-arginine biosynthesis; L-arginine from L-ornithine and carbamoyl phosphate: step 3/3. The protein is Argininosuccinate lyase of Desulforudis audaxviator (strain MP104C).